The following is a 335-amino-acid chain: MSQILFKTKTFWYGIALTFCIATLSYFLAKLPFLMILGQLVTAILIGIIIRALFPVPEKWFTGIQFSNKVILRAGIILLGFRLNLVDIYHAGWRVFLIAALCLSFGITIVYFLAKLFGVDKKLAILVACGTGICGAAAVVAISPQVKADNNQTAVAATIIALLGTIFTVIYTLIYPILPLGPDGYGIFAGATLHEIAHVIAAADPGGSSAVDMAVIVKLTRVALLVPVCFVVAKMVNAGTKNRFSWAELPVPWFIFGFLATSAINSFGIIPTSVTDFLVICAYFLIAMSMGGLGLNVHLPSFGKMGGKPFAAALIGSVFLSAFGLALVLLFHLAG.

8 helical membrane-spanning segments follow: residues 10 to 28, 33 to 55, 91 to 113, 123 to 142, 155 to 177, 251 to 270, 277 to 299, and 309 to 331; these read TFWYGIALTFCIATLSYFL, FLMILGQLVTAILIGIIIRALFP, AGWRVFLIAALCLSFGITIVYFL, LAILVACGTGICGAAAVVAI, VAATIIALLGTIFTVIYTLIYPI, VPWFIFGFLATSAINSFGII, FLVICAYFLIAMSMGGLGLNVHL, and PFAAALIGSVFLSAFGLALVLLF.

The protein belongs to the UPF0324 family.

Its subcellular location is the cell membrane. The polypeptide is UPF0324 membrane protein LMOf2365_2179 (Listeria monocytogenes serotype 4b (strain F2365)).